The following is a 227-amino-acid chain: UPF0758 protein Dhaf_4352 (227 aa).

Positions 105 to 227 constitute an MPN domain; it reads VINSPQDIAH…YISLKERGIL (123 aa). Zn(2+)-binding residues include His-176, His-178, and Asp-189. The JAMM motif motif lies at 176–189; that stretch reads HNHPSGDPTPSSED.

The protein belongs to the UPF0758 family.

This is UPF0758 protein Dhaf_4352 from Desulfitobacterium hafniense (strain DSM 10664 / DCB-2).